We begin with the raw amino-acid sequence, 97 residues long: Small ribosomal subunit protein uS17 (97 aa).

Residues Met-1 to Lys-20 form a disordered region.

This sequence belongs to the universal ribosomal protein uS17 family. In terms of assembly, part of the 30S ribosomal subunit.

One of the primary rRNA binding proteins, it binds specifically to the 5'-end of 16S ribosomal RNA. The sequence is that of Small ribosomal subunit protein uS17 from Corynebacterium jeikeium (strain K411).